The sequence spans 267 residues: Hydroxyacylglutathione hydrolase (267 aa).

The Zn(2+) site is built by His55, His57, Asp59, His60, His121, Asp138, and His176.

Belongs to the metallo-beta-lactamase superfamily. Glyoxalase II family. Monomer. It depends on Zn(2+) as a cofactor.

It carries out the reaction an S-(2-hydroxyacyl)glutathione + H2O = a 2-hydroxy carboxylate + glutathione + H(+). Its pathway is secondary metabolite metabolism; methylglyoxal degradation; (R)-lactate from methylglyoxal: step 2/2. In terms of biological role, thiolesterase that catalyzes the hydrolysis of S-D-lactoyl-glutathione to form glutathione and D-lactic acid. The chain is Hydroxyacylglutathione hydrolase from Shewanella sp. (strain ANA-3).